The primary structure comprises 161 residues: Pleiotrophin-A (161 aa).

An N-terminal signal peptide occupies residues 1–23; the sequence is MRHQHGLFMLALLAFLFVITVLG. Intrachain disulfides connect Cys41–Cys70, Cys49–Cys79, Cys56–Cys83, Cys93–Cys125, and Cys103–Cys135. 2 chondroitin sulfate binding regions span residues 86–93 and 117–125; these read KKQFGAEC and KRALHNAEC. The interval 136–161 is disordered; that stretch reads GKVTKPKLQESKKKKKEGKNKEKLLD. The interval 141-161 is chondroitin sulfate A binding; sequence PKLQESKKKKKEGKNKEKLLD.

This sequence belongs to the pleiotrophin family. As to expression, expressed in high levels in brain and eye. Lower levels in bone. In the tailbud embryo stage, it is expressed exclusively in the central nervous system, especially in the hind region of the brain.

Its subcellular location is the secreted. Functionally, secreted growth factor that mediates its signal through cell-surface proteoglycan and non-proteoglycan receptors. Binds cell-surface proteoglycan receptor via their chondroitin sulfate (CS) groups. Thereby regulates many processes like cell proliferation, cell survival, cell growth, cell differentiation and cell migration. Has antibacterial activity against both Gram-positive and Gram-negative bacteria. This Xenopus laevis (African clawed frog) protein is Pleiotrophin-A (ptn-a).